The sequence spans 474 residues: Vacuolar basic amino acid transporter 2 (474 aa).

Topologically, residues methionine 1–asparagine 33 are cytoplasmic. Residues cysteine 34–asparagine 54 traverse the membrane as a helical segment. Over isoleucine 55–arginine 62 the chain is Vacuolar. The chain crosses the membrane as a helical span at residues alanine 63 to proline 85. Over serine 86–asparagine 97 the chain is Cytoplasmic. The chain crosses the membrane as a helical span at residues leucine 98–isoleucine 118. The Vacuolar portion of the chain corresponds to glycine 119–arginine 121. The chain crosses the membrane as a helical span at residues tryptophan 122–valine 142. At proline 143–aspartate 167 the chain is on the cytoplasmic side. A helical membrane pass occupies residues valine 168–glycine 188. Residues cysteine 189 to tryptophan 196 are Vacuolar-facing. The chain crosses the membrane as a helical span at residues threonine 197–leucine 217. The Cytoplasmic segment spans residues histidine 218–serine 238. Residues valine 239–leucine 259 traverse the membrane as a helical segment. At proline 260 to lysine 273 the chain is on the vacuolar side. The chain crosses the membrane as a helical span at residues alanine 274–phenylalanine 294. The Cytoplasmic portion of the chain corresponds to serine 295 to arginine 303. Residues leucine 304–glutamate 324 form a helical membrane-spanning segment. At lysine 325–leucine 331 the chain is on the vacuolar side. A helical membrane pass occupies residues isoleucine 332–phenylalanine 352. At threonine 353–serine 375 the chain is on the cytoplasmic side. A helical transmembrane segment spans residues isoleucine 376–leucine 396. Over leucine 397–histidine 447 the chain is Vacuolar. N-linked (GlcNAc...) asparagine glycosylation occurs at asparagine 420. A helical membrane pass occupies residues leucine 448–alanine 468. Topologically, residues lysine 469–arginine 474 are cytoplasmic.

This sequence belongs to the major facilitator superfamily.

Its subcellular location is the vacuole membrane. Functionally, transporter required for vacuolar uptake of histidine, arginine and lysine and to a lesser extent tyrosine. This is Vacuolar basic amino acid transporter 2 (VBA2) from Saccharomyces cerevisiae (strain ATCC 204508 / S288c) (Baker's yeast).